A 172-amino-acid chain; its full sequence is NAD(P)H-quinone oxidoreductase subunit I, chloroplastic (172 aa).

2 consecutive 4Fe-4S ferredoxin-type domains span residues 55 to 84 (GRIH…VDWK) and 95 to 124 (LNYS…MTEE). Cys64, Cys67, Cys70, Cys74, Cys104, Cys107, Cys110, and Cys114 together coordinate [4Fe-4S] cluster.

The protein belongs to the complex I 23 kDa subunit family. In terms of assembly, NDH is composed of at least 16 different subunits, 5 of which are encoded in the nucleus. [4Fe-4S] cluster serves as cofactor.

It localises to the plastid. It is found in the chloroplast thylakoid membrane. The enzyme catalyses a plastoquinone + NADH + (n+1) H(+)(in) = a plastoquinol + NAD(+) + n H(+)(out). The catalysed reaction is a plastoquinone + NADPH + (n+1) H(+)(in) = a plastoquinol + NADP(+) + n H(+)(out). Its function is as follows. NDH shuttles electrons from NAD(P)H:plastoquinone, via FMN and iron-sulfur (Fe-S) centers, to quinones in the photosynthetic chain and possibly in a chloroplast respiratory chain. The immediate electron acceptor for the enzyme in this species is believed to be plastoquinone. Couples the redox reaction to proton translocation, and thus conserves the redox energy in a proton gradient. The chain is NAD(P)H-quinone oxidoreductase subunit I, chloroplastic from Capsella bursa-pastoris (Shepherd's purse).